The chain runs to 137 residues: Large ribosomal subunit protein uL16 (137 aa).

This sequence belongs to the universal ribosomal protein uL16 family. In terms of assembly, part of the 50S ribosomal subunit.

Binds 23S rRNA and is also seen to make contacts with the A and possibly P site tRNAs. The chain is Large ribosomal subunit protein uL16 from Solidesulfovibrio magneticus (strain ATCC 700980 / DSM 13731 / RS-1) (Desulfovibrio magneticus).